We begin with the raw amino-acid sequence, 432 residues long: Peptidase B (432 aa).

Mn(2+)-binding residues include Lys-196 and Asp-201. Lys-208 is an active-site residue. Mn(2+)-binding residues include Asp-219, Asp-278, and Glu-280. Residue Arg-282 is part of the active site.

It belongs to the peptidase M17 family. Homohexamer. Mn(2+) serves as cofactor.

The protein resides in the cytoplasm. It carries out the reaction Release of an N-terminal amino acid, Xaa, from a peptide or arylamide. Xaa is preferably Glu or Asp but may be other amino acids, including Leu, Met, His, Cys and Gln.. Functionally, probably plays an important role in intracellular peptide degradation. The polypeptide is Peptidase B (Yersinia pseudotuberculosis serotype O:1b (strain IP 31758)).